A 162-amino-acid chain; its full sequence is Endoribonuclease YbeY (162 aa).

Positions 117, 121, and 127 each coordinate Zn(2+).

The protein belongs to the endoribonuclease YbeY family. It depends on Zn(2+) as a cofactor.

Its subcellular location is the cytoplasm. Its function is as follows. Single strand-specific metallo-endoribonuclease involved in late-stage 70S ribosome quality control and in maturation of the 3' terminus of the 16S rRNA. The chain is Endoribonuclease YbeY from Francisella tularensis subsp. tularensis (strain WY96-3418).